The primary structure comprises 132 residues: ATP synthase epsilon chain (132 aa).

This sequence belongs to the ATPase epsilon chain family. In terms of assembly, F-type ATPases have 2 components, CF(1) - the catalytic core - and CF(0) - the membrane proton channel. CF(1) has five subunits: alpha(3), beta(3), gamma(1), delta(1), epsilon(1). CF(0) has three main subunits: a, b and c.

The protein resides in the cell membrane. Functionally, produces ATP from ADP in the presence of a proton gradient across the membrane. This chain is ATP synthase epsilon chain (atpC), found in Geobacillus stearothermophilus (Bacillus stearothermophilus).